A 396-amino-acid chain; its full sequence is Stearoyl-[acyl-carrier-protein] 9-desaturase 2, chloroplastic (396 aa).

Residues 1–32 (MALRPNDVTLRLTPPLAAAARRNRRAAAGGVR) constitute a chloroplast transit peptide. Glu138, Glu176, His179, Glu229, Glu262, and His265 together coordinate Fe cation.

Belongs to the fatty acid desaturase type 2 family. In terms of assembly, homodimer. Fe(2+) serves as cofactor.

It is found in the plastid. The protein resides in the chloroplast. It catalyses the reaction octadecanoyl-[ACP] + 2 reduced [2Fe-2S]-[ferredoxin] + O2 + 2 H(+) = (9Z)-octadecenoyl-[ACP] + 2 oxidized [2Fe-2S]-[ferredoxin] + 2 H2O. Its pathway is lipid metabolism; fatty acid metabolism. Its function is as follows. Converts stearoyl-ACP to oleoyl-ACP by introduction of a cis double bond between carbons 9 and 10 of the acyl chain. Required for the repression of the salicylic acid (SA) signaling pathway. This Oryza sativa subsp. indica (Rice) protein is Stearoyl-[acyl-carrier-protein] 9-desaturase 2, chloroplastic (SSI2).